A 313-amino-acid chain; its full sequence is tRNA dimethylallyltransferase (313 aa).

11–18 (GPTAGGKT) lines the ATP pocket. Position 13–18 (13–18 (TAGGKT)) interacts with substrate. 3 interaction with substrate tRNA regions span residues 36–39 (DSAL), 160–164 (QRIGR), and 243–248 (RCVGYR).

Belongs to the IPP transferase family. In terms of assembly, monomer. Mg(2+) serves as cofactor.

It carries out the reaction adenosine(37) in tRNA + dimethylallyl diphosphate = N(6)-dimethylallyladenosine(37) in tRNA + diphosphate. Functionally, catalyzes the transfer of a dimethylallyl group onto the adenine at position 37 in tRNAs that read codons beginning with uridine, leading to the formation of N6-(dimethylallyl)adenosine (i(6)A). In Neisseria meningitidis serogroup A / serotype 4A (strain DSM 15465 / Z2491), this protein is tRNA dimethylallyltransferase.